Reading from the N-terminus, the 443-residue chain is Chromosome partition protein MukF (443 aa).

The leucine-zipper stretch occupies residues 209–237 (LDETSGNLRELQDTLNAAGDKLQAQLLRI).

This sequence belongs to the MukF family. Interacts, and probably forms a ternary complex, with MukE and MukB via its C-terminal region. The complex formation is stimulated by calcium or magnesium. It is required for an interaction between MukE and MukB.

It is found in the cytoplasm. It localises to the nucleoid. In terms of biological role, involved in chromosome condensation, segregation and cell cycle progression. May participate in facilitating chromosome segregation by condensation DNA from both sides of a centrally located replisome during cell division. Not required for mini-F plasmid partitioning. Probably acts via its interaction with MukB and MukE. Overexpression results in anucleate cells. It has a calcium binding activity. In Actinobacillus pleuropneumoniae serotype 5b (strain L20), this protein is Chromosome partition protein MukF.